A 122-amino-acid chain; its full sequence is Protein FAM223A (122 aa).

Belongs to the FAM223 family.

The protein is Protein FAM223A (FAM223A) of Homo sapiens (Human).